Consider the following 379-residue polypeptide: Tryptophan--tRNA ligase, mitochondrial (379 aa).

ATP contacts are provided by residues Q42 and 48–51 (HLGN). The 'HIGH' region signature appears at 43–51 (PTGCFHLGN). D184 contributes to the L-tryptophan binding site. Residues 196-198 (GDD), V235, 244-248 (KMSKS), and K247 each bind ATP. The 'KMSKS' region motif lies at 244 to 248 (KMSKS).

Belongs to the class-I aminoacyl-tRNA synthetase family. As to quaternary structure, homodimer.

The protein localises to the mitochondrion matrix. It carries out the reaction tRNA(Trp) + L-tryptophan + ATP = L-tryptophyl-tRNA(Trp) + AMP + diphosphate + H(+). Functionally, mitochondrial aminoacyl-tRNA synthetase that catalyzes the attachment of tryptophan to tRNA(Trp). This Saccharomyces cerevisiae (strain ATCC 204508 / S288c) (Baker's yeast) protein is Tryptophan--tRNA ligase, mitochondrial (MSW1).